Here is a 433-residue protein sequence, read N- to C-terminus: MVWKVAVFLSVALGIGAVPIDDPEDGGKHWVVIVAGSNGWYNYRHQADACHAYQIIHRNGIPDEQIVVMMYDDIAYSEDNPTPGIVINRPNGTDVYQGVPKDYTGEDVTPQNFLAVLRGDAEAVKGIGSGKVLKSGPQDHVFIYFTDHGSTGILVFPNEDLHVKDLNETIHYMYKHKMYRKMVFYIEACESGSMMNHLPDNINVYATTAANPRESSYACYYDEKRSTYLGDWYSVNWMEDSDVEDLTKETLHKQYHLVKSHTNTSHVMQYGNKTISTMKVMQFQGMKRKASSPVPLPPVTHLDLTPSPDVPLTIMKRKLMNTNDLEESRQLTEEIQRHLDARHLIEKSVRKIVSLLAASEAEVEQLLSERAPLTGHSCYPEALLHFRTHCFNWHSPTYEYALRHLYVLVNLCEKPYPLHRIKLSMDHVCLGHY.

The signal sequence occupies residues 1–17; sequence MVWKVAVFLSVALGIGA. N-linked (GlcNAc...) asparagine glycosylation is present at Asn-91. Residue His-148 is part of the active site. Asn-167 carries N-linked (GlcNAc...) asparagine glycosylation. The active-site Nucleophile is the Cys-189. N-linked (GlcNAc...) asparagine glycosylation is found at Asn-263 and Asn-272. The propeptide occupies 324-433; it reads DLEESRQLTE…SMDHVCLGHY (110 aa). Cystine bridges form between Cys-378-Cys-412 and Cys-390-Cys-429.

This sequence belongs to the peptidase C13 family. In terms of assembly, homodimer before autocatalytic removal of the propeptide. Monomer after autocatalytic processing. May interact with integrins. Activated by autocatalytic processing at pH 4. As to expression, ubiquitous. Particularly abundant in kidney, heart and placenta.

It is found in the lysosome. The enzyme catalyses Hydrolysis of proteins and small molecule substrates at -Asn-|-Xaa- bonds.. Inhibited by CST6. In terms of biological role, has a strict specificity for hydrolysis of asparaginyl bonds. Can also cleave aspartyl bonds slowly, especially under acidic conditions. Involved in the processing of proteins for MHC class II antigen presentation in the lysosomal/endosomal system. Also involved in MHC class I antigen presentation in cross-presenting dendritic cells by mediating cleavage and maturation of Perforin-2 (MPEG1), thereby promoting antigen translocation in the cytosol. Required for normal lysosomal protein degradation in renal proximal tubules. Required for normal degradation of internalized EGFR. Plays a role in the regulation of cell proliferation via its role in EGFR degradation. The protein is Legumain of Homo sapiens (Human).